We begin with the raw amino-acid sequence, 385 residues long: Glucans biosynthesis protein C (385 aa).

The next 10 membrane-spanning stretches (helical) occupy residues 17–37, 60–80, 91–111, 137–157, 173–193, 212–232, 239–259, 274–294, 311–331, and 338–358; these read AWLM…SHTW, MQVF…RYPL, VGIP…IMLQ, ISHL…VWIF, KFSM…YAVI, FIVM…LAFI, LFTT…VAYL, TESV…FSFG, ASLF…AYIT, and WLGF…LYEI.

Belongs to the acyltransferase 3 family. OpgC subfamily.

It is found in the cell membrane. Its pathway is glycan metabolism; osmoregulated periplasmic glucan (OPG) biosynthesis. In terms of biological role, necessary for the succinyl substitution of periplasmic glucans. Could catalyze the transfer of succinyl residues from the cytoplasmic side of the membrane to the nascent glucan backbones on the periplasmic side of the membrane. This chain is Glucans biosynthesis protein C, found in Escherichia coli O17:K52:H18 (strain UMN026 / ExPEC).